The primary structure comprises 150 residues: Putative biopolymer transport protein ExbB-like 2 (150 aa).

3 helical membrane-spanning segments follow: residues 5–25 (VDYG…AIAI), 63–83 (APYI…MDLG), and 97–117 (LALA…AIVI).

Belongs to the ExbB/TolQ family.

It localises to the cell inner membrane. This chain is Putative biopolymer transport protein ExbB-like 2, found in Helicobacter pylori (strain J99 / ATCC 700824) (Campylobacter pylori J99).